Reading from the N-terminus, the 607-residue chain is Dopamine receptor 3 (607 aa).

Over Met-1 to Ala-23 the chain is Extracellular. A helical transmembrane segment spans residues Ala-24–Met-44. Over Ser-45–Met-58 the chain is Cytoplasmic. The chain crosses the membrane as a helical span at residues Leu-59–Val-79. Residues Tyr-80–His-96 are Extracellular-facing. Cysteines 95 and 173 form a disulfide. The helical transmembrane segment at Val-97–Ser-117 threads the bilayer. The Cytoplasmic portion of the chain corresponds to Leu-118–Met-141. The chain crosses the membrane as a helical span at residues Ile-142 to Val-162. The Extracellular segment spans residues Asn-163–Met-182. A helical transmembrane segment spans residues Ile-183–Ile-203. Over Phe-204–Ala-523 the chain is Cytoplasmic. A disordered region spans residues Val-402–Pro-435. Over residues Gln-413–Asn-424 the composition is skewed to polar residues. A helical membrane pass occupies residues Thr-524 to Leu-544. At His-545 to Ser-558 the chain is on the extracellular side. A helical transmembrane segment spans residues Ala-559–Leu-579. At Asn-580–Arg-607 the chain is on the cytoplasmic side.

This sequence belongs to the G-protein coupled receptor 1 family. In terms of tissue distribution, expressed in the neurons of the head, ventral cord and tail with weak expression observed in body wall muscles and PVD neurons. In the ventral cord, expressed strongly in GABAergic neurons with weaker expression in cholinergic motor neurons. Expressed in cholinergic SIA neurons and octopaminergic RIC neurons. In males, expressed in the dorsal and ventral spicule protractor and retractor muscles, and the sensory post-cloacal sensilla B (PCB) neuron. Expressed in the head acetylcholine neurons. Expressed in the AVA, AVB, AVD and AVE command interneurons. Expressed in premotor interneurons.

The protein localises to the cell membrane. Functionally, G-protein coupled receptor which binds to the neurotransmitter dopamine with high affinity leading to the activation of an associated G-protein and downstream signaling pathways. Couples to G-proteins to inhibit adenylate cyclase (AC) activity and cAMP production. Antagonizes the D1-like dopamine receptor dop-1 to negatively regulate the rate of locomotion. Negatively regulates locomotion through the activation of goa-1 subunit proteins which inactivates the unc-77/nca-1 and nca-2 ion-channels in the command interneurons. Inhibits early-stage swimming by modulating the unc-77/nca-1 and nca-2 ion channels of premotor interneurons. In GABAergic, RIC, and SIA neurons, antagonizes the function of dop-1 to play a role in behavioral plasticity and regulate the decision-making process when conflicting alternatives are present. Antagonizes octopamine signaling in response to food by promoting the dopamine-mediated suppression of crh-1/CREB1 transcription factor activation in cholinergic SIA neurons. This is most likely in association with the G(o)-alpha G-protein subunit goa-1. Promotes male mating behavior by antagonizing acetylcholine signaling to control the protrusion of copulatory spicules from the tail of males during hermaphrodite vulval location. Under mitochondria stress, plays a role in bacterial preference, resulting in learned avoidance behavior. This is Dopamine receptor 3 from Caenorhabditis elegans.